Reading from the N-terminus, the 375-residue chain is MTLQATPLNAIHRALGARMVDFGGWDMPVNYGSQIEEHNAVRTDAGMFDVSHMCVVDLAGANTRSFLRGLLANNVDKLQTPGKALYSCMLDEKGGVIDDLIVYFFAEDRFRLVVNASTALGDIEWIRARNAATGSDVTITPRREDVAPAGVQPLAIVAVQGPNARTKVWSTFPSTQPSDTLKPFNAAVVQDPALGEIMVARTGYTGEDGFELVVPAENVAAIWEKLNAAGVRPAGLGARDTLRLEAGMNLYGQDMDINTSPLDAGLAWTVDLQSERDFTGKAALAAAGSRQQFLGLILRDKGGVLRAHQKVITPAGDGEITSGTFSPSLSQSIAFARLPKDVAVGDTVQVEIRDRKLNATVVKLPFVRNGKALVS.

Belongs to the GcvT family. In terms of assembly, the glycine cleavage system is composed of four proteins: P, T, L and H.

It catalyses the reaction N(6)-[(R)-S(8)-aminomethyldihydrolipoyl]-L-lysyl-[protein] + (6S)-5,6,7,8-tetrahydrofolate = N(6)-[(R)-dihydrolipoyl]-L-lysyl-[protein] + (6R)-5,10-methylene-5,6,7,8-tetrahydrofolate + NH4(+). Its function is as follows. The glycine cleavage system catalyzes the degradation of glycine. This is Aminomethyltransferase from Cupriavidus necator (strain ATCC 17699 / DSM 428 / KCTC 22496 / NCIMB 10442 / H16 / Stanier 337) (Ralstonia eutropha).